A 142-amino-acid polypeptide reads, in one-letter code: Large ribosomal subunit protein uL13 (142 aa).

This sequence belongs to the universal ribosomal protein uL13 family. As to quaternary structure, part of the 50S ribosomal subunit.

This protein is one of the early assembly proteins of the 50S ribosomal subunit, although it is not seen to bind rRNA by itself. It is important during the early stages of 50S assembly. The sequence is that of Large ribosomal subunit protein uL13 from Hamiltonella defensa subsp. Acyrthosiphon pisum (strain 5AT).